The primary structure comprises 351 residues: Farnesyl pyrophosphate synthase (351 aa).

Isopentenyl diphosphate contacts are provided by Lys51, Arg54, and Gln92. The Mg(2+) site is built by Asp99 and Asp103. Arg108 provides a ligand contact to dimethylallyl diphosphate. Residue Arg109 participates in isopentenyl diphosphate binding. Positions 196, 197, 236, 253, and 262 each coordinate dimethylallyl diphosphate.

The protein belongs to the FPP/GGPP synthase family. Mg(2+) is required as a cofactor.

It catalyses the reaction isopentenyl diphosphate + dimethylallyl diphosphate = (2E)-geranyl diphosphate + diphosphate. The catalysed reaction is isopentenyl diphosphate + (2E)-geranyl diphosphate = (2E,6E)-farnesyl diphosphate + diphosphate. The protein operates within isoprenoid biosynthesis; farnesyl diphosphate biosynthesis; farnesyl diphosphate from geranyl diphosphate and isopentenyl diphosphate: step 1/1. It functions in the pathway isoprenoid biosynthesis; geranyl diphosphate biosynthesis; geranyl diphosphate from dimethylallyl diphosphate and isopentenyl diphosphate: step 1/1. In terms of biological role, farnesyl pyrophosphate synthase; part of the second module of ergosterol biosynthesis pathway that includes the middle steps of the pathway. ERG20 catalyzes the sequential condensation of isopentenyl pyrophosphate with dimethylallyl pyrophosphate, and then with the resultant geranylpyrophosphate to the ultimate product farnesyl pyrophosphate. The second module is carried out in the vacuole and involves the formation of farnesyl diphosphate, which is also an important intermediate in the biosynthesis of ubiquinone, dolichol, heme and prenylated proteins. Activity by the mevalonate kinase ERG12 first converts mevalonate into 5-phosphomevalonate. 5-phosphomevalonate is then further converted to 5-diphosphomevalonate by the phosphomevalonate kinase ERG8. The diphosphomevalonate decarboxylase MVD then produces isopentenyl diphosphate. The isopentenyl-diphosphate delta-isomerase IDI1 then catalyzes the 1,3-allylic rearrangement of the homoallylic substrate isopentenyl (IPP) to its highly electrophilic allylic isomer, dimethylallyl diphosphate (DMAPP). Finally the farnesyl diphosphate synthase ERG20 catalyzes the sequential condensation of isopentenyl pyrophosphate with dimethylallyl pyrophosphate, and then with the resultant geranylpyrophosphate to the ultimate product farnesyl pyrophosphate. This is Farnesyl pyrophosphate synthase from Candida albicans (strain SC5314 / ATCC MYA-2876) (Yeast).